A 118-amino-acid polypeptide reads, in one-letter code: Putative pterin-4-alpha-carbinolamine dehydratase (118 aa).

This sequence belongs to the pterin-4-alpha-carbinolamine dehydratase family.

It catalyses the reaction (4aS,6R)-4a-hydroxy-L-erythro-5,6,7,8-tetrahydrobiopterin = (6R)-L-erythro-6,7-dihydrobiopterin + H2O. This is Putative pterin-4-alpha-carbinolamine dehydratase from Pseudomonas savastanoi pv. phaseolicola (strain 1448A / Race 6) (Pseudomonas syringae pv. phaseolicola (strain 1448A / Race 6)).